The primary structure comprises 448 residues: Maintenance of mitochondrial morphology protein 1 (448 aa).

At 1–74 (MTESVIYSGT…LNHTWSFTQG (74 aa)) the chain is on the lumenal side. Residues 75 to 95 (LVVGQLSVIVVVAIFIKFFVF) form a helical membrane-spanning segment. At 96 to 448 (ADSSATTTTT…IVDKTEEASI (353 aa)) the chain is on the cytoplasmic side. Disordered stretches follow at residues 119 to 144 (RNKN…LNSP) and 303 to 357 (LQNV…SQED). Basic and acidic residues predominate over residues 127–140 (SNEDKDPNNNKEDD). The 256-residue stretch at 164–419 (SPESLDWFNV…EPRFQVVKVP (256 aa)) folds into the SMP-LTD domain. A compositionally biased stretch (low complexity) spans 313–332 (PSNEPNSQNQTQQPTPVNNS). The span at 345–356 (ETKHSKAKRSQE) shows a compositional bias: basic and acidic residues.

This sequence belongs to the MMM1 family. In terms of assembly, homodimer. Component of the ER-mitochondria encounter structure (ERMES) or MDM complex, composed of MMM1, MDM10, MDM12 and MDM34. An MMM1 homodimer associates with one molecule of MDM12 on each side in a pairwise head-to-tail manner, and the SMP-LTD domains of MMM1 and MDM12 generate a continuous hydrophobic tunnel for phospholipid trafficking.

It localises to the endoplasmic reticulum membrane. In terms of biological role, component of the ERMES/MDM complex, which serves as a molecular tether to connect the endoplasmic reticulum (ER) and mitochondria. Components of this complex are involved in the control of mitochondrial shape and protein biogenesis, and function in nonvesicular lipid trafficking between the ER and mitochondria. The MDM12-MMM1 subcomplex functions in the major beta-barrel assembly pathway that is responsible for biogenesis of all outer membrane beta-barrel proteins, and acts in a late step after the SAM complex. The MDM10-MDM12-MMM1 subcomplex further acts in the TOM40-specific pathway after the action of the MDM12-MMM1 complex. Essential for establishing and maintaining the structure of mitochondria and maintenance of mtDNA nucleoids. The sequence is that of Maintenance of mitochondrial morphology protein 1 from Debaryomyces hansenii (strain ATCC 36239 / CBS 767 / BCRC 21394 / JCM 1990 / NBRC 0083 / IGC 2968) (Yeast).